Consider the following 317-residue polypeptide: NAC domain-containing protein 55 (317 aa).

Residues L14–K162 form the NAC domain. The DNA-binding element occupies V111–K168.

In terms of tissue distribution, expressed in leaves.

It is found in the nucleus. Transcription factors that bind specifically to the 5'-CATGTG-3' motif. The protein is NAC domain-containing protein 55 (NAC055) of Arabidopsis thaliana (Mouse-ear cress).